An 834-amino-acid chain; its full sequence is Taste receptor type 1 member 2 (834 aa).

An N-terminal signal peptide occupies residues 1–19 (MEPRVRTVCFLFFLLRVLA). At 20–561 (EPAKNSDFYL…SFLEWHEAAT (542 aa)) the chain is on the extracellular side. N-linked (GlcNAc...) asparagine glycans are attached at residues asparagine 84, asparagine 292, asparagine 312, asparagine 363, asparagine 423, asparagine 482, and asparagine 522. Residues 562 to 582 (IAVALLAALGFLSTLAILVIF) form a helical membrane-spanning segment. Over 583 to 597 (WRHFETPMVRSAGGP) the chain is Cytoplasmic. Residues 598–618 (MCFLMLTLLLVAYMVVPVYVG) form a helical membrane-spanning segment. Residues 619–630 (LPKVSTCLCRQA) lie on the Extracellular side of the membrane. The helical transmembrane segment at 631 to 651 (LFPVCFTICISCIAVRSFQIV) threads the bilayer. The Cytoplasmic segment spans residues 652–676 (CVFKMASRFPRAYSYWVRYQGSYVS). Residues 677 to 697 (VAFITALKMVTVVISLLATGL) traverse the membrane as a helical segment. At 698-722 (NPTTRTDTDDPKIMIISCNPNYRNS) the chain is on the extracellular side. A helical transmembrane segment spans residues 723–743 (LLFNTSLDLLLSVAGFSFAYM). The Cytoplasmic portion of the chain corresponds to 744-755 (GKELPTNYNEAK). The chain crosses the membrane as a helical span at residues 756–776 (FITFSMTFYFTSSVSLCTFMS). Over 777 to 779 (VYD) the chain is Extracellular. The helical transmembrane segment at 780–800 (GVLVTIVDLLVTVFNLLAISL) threads the bilayer. Topologically, residues 801-834 (GYFGPKCYMILFYPERNTPAYFNSMIQGYTMRRD) are cytoplasmic.

This sequence belongs to the G-protein coupled receptor 3 family. TAS1R subfamily. In terms of assembly, forms heterodimers with TAS1R3.

The protein resides in the cell membrane. Putative taste receptor. TAS1R2/TAS1R3 recognizes diverse natural and synthetic sweeteners. This Saimiri sciureus (Common squirrel monkey) protein is Taste receptor type 1 member 2 (TAS1R2).